The sequence spans 122 residues: Serum amyloid A-1 protein (122 aa).

A signal peptide spans 1-19 (MKLLSGLLLCSLVLGVSSQ). Positions 20-45 (RWFSFIGEATQGAWDMWRAYSDMREA) are important for amyloid formation. Positions 87-122 (MGHGAEDSMADQAANEWGRSGKDPNHFRPKGLPDKY) are disordered. Residues 105-122 (RSGKDPNHFRPKGLPDKY) show a composition bias toward basic and acidic residues.

The protein belongs to the SAA family. As to quaternary structure, homohexamer; dimer of trimers. Can form amyloid fibrils after partial proteolysis; the native, undenatured protein does not form amyloid fibrils (in vitro). Apolipoprotein of the HDL complex. Binds to heparin. Detected in liver.

It is found in the secreted. Its function is as follows. Major acute phase protein. This Oryctolagus cuniculus (Rabbit) protein is Serum amyloid A-1 protein (SAA1).